Consider the following 402-residue polypeptide: CinA-like protein (402 aa).

This sequence belongs to the CinA family.

The sequence is that of CinA-like protein from Deinococcus deserti (strain DSM 17065 / CIP 109153 / LMG 22923 / VCD115).